The chain runs to 266 residues: MSIIEIIVLALIQGFTEFLPISSSAHLILPSQILGWEDQGLAFDVAVHVGTLIAVVIYFRKEVSSILSAWFKSFGAQGSTDDSKLGWWIILGTIPAAILGLLLKDMIELYLRSAWVIAVTTIIFGLLLWYADAKGKQIKTIYQLNWKTALIIGLAQAVAMIPGTSRSGITMTAGLMLGMNKQSAARFSFLLAIPIISMMGLYYTVELALGDHLVDWSTLLLGVVLSFLSAYVCIYMFLKVIERMGMLPFVIYRLLLGVGLIVFLTL.

Transmembrane regions (helical) follow at residues methionine 1 to isoleucine 21, glutamine 39 to phenylalanine 59, serine 83 to leucine 103, serine 113 to alanine 133, isoleucine 141 to isoleucine 161, phenylalanine 189 to leucine 209, threonine 218 to leucine 238, and methionine 244 to leucine 264.

This sequence belongs to the UppP family.

The protein resides in the cell inner membrane. The enzyme catalyses di-trans,octa-cis-undecaprenyl diphosphate + H2O = di-trans,octa-cis-undecaprenyl phosphate + phosphate + H(+). Its function is as follows. Catalyzes the dephosphorylation of undecaprenyl diphosphate (UPP). Confers resistance to bacitracin. The sequence is that of Undecaprenyl-diphosphatase 1 from Pseudoalteromonas translucida (strain TAC 125).